The sequence spans 396 residues: 1-deoxy-D-xylulose 5-phosphate reductoisomerase (396 aa).

Thr-15, Gly-16, Ser-17, Ile-18, Gly-41, and Asn-129 together coordinate NADPH. Lys-130 contacts 1-deoxy-D-xylulose 5-phosphate. Glu-131 contributes to the NADPH binding site. Asp-155 contacts Mn(2+). Ser-156, Glu-157, Ser-182, and His-205 together coordinate 1-deoxy-D-xylulose 5-phosphate. Residue Glu-157 coordinates Mn(2+). Gly-211 contributes to the NADPH binding site. The 1-deoxy-D-xylulose 5-phosphate site is built by Ser-218, Asn-223, Lys-224, and Glu-227. Mn(2+) is bound at residue Glu-227.

This sequence belongs to the DXR family. Mg(2+) is required as a cofactor. The cofactor is Mn(2+).

The catalysed reaction is 2-C-methyl-D-erythritol 4-phosphate + NADP(+) = 1-deoxy-D-xylulose 5-phosphate + NADPH + H(+). It participates in isoprenoid biosynthesis; isopentenyl diphosphate biosynthesis via DXP pathway; isopentenyl diphosphate from 1-deoxy-D-xylulose 5-phosphate: step 1/6. Catalyzes the NADPH-dependent rearrangement and reduction of 1-deoxy-D-xylulose-5-phosphate (DXP) to 2-C-methyl-D-erythritol 4-phosphate (MEP). The protein is 1-deoxy-D-xylulose 5-phosphate reductoisomerase of Xanthomonas campestris pv. campestris (strain 8004).